Reading from the N-terminus, the 295-residue chain is MAWISLRIDARDDNAELLSDTLMELGALSASIEDANAETPDEQPIFGEPGDPPPGIWQQNVVTALLDESADLDSLLEELSAATGITDFRYSTETIAEQDWVRATQSQFEPIRIRDDLWIVPSWHDAPNPDGLNIVLDPGLAFGTGSHPTTHLCLSWLADTVKPDTSVLDYGCGSGILAIAARKLGAGKVVGVDIDAQAIQSSVYNADQNQVDASFYLASDLPGGQFDIVVANILSSALSVLAPALARAARSGGRIALSGILREQADQVSAIYQEWFEMDAPVFMDSWVLLTGSRR.

Thr-150, Gly-171, Asp-193, and Asn-232 together coordinate S-adenosyl-L-methionine.

This sequence belongs to the methyltransferase superfamily. PrmA family.

The protein resides in the cytoplasm. It carries out the reaction L-lysyl-[protein] + 3 S-adenosyl-L-methionine = N(6),N(6),N(6)-trimethyl-L-lysyl-[protein] + 3 S-adenosyl-L-homocysteine + 3 H(+). Its function is as follows. Methylates ribosomal protein L11. This Methylobacillus flagellatus (strain ATCC 51484 / DSM 6875 / VKM B-1610 / KT) protein is Ribosomal protein L11 methyltransferase.